The chain runs to 580 residues: Arrestin domain-containing protein A (580 aa).

N-linked (GlcNAc...) asparagine glycans are attached at residues N27, N33, and N60. The tract at residues 31–54 is disordered; that stretch reads NVNTTSSHHHHHSNSGNAEVSFNG. 2 disordered regions span residues 67 to 86 and 95 to 114; these read ETHS…EISI and MTMS…HKES. A helical membrane pass occupies residues 118–138; the sequence is NLSLGGIVGAVVGAVTGGVMI. N149, N341, and N342 each carry an N-linked (GlcNAc...) asparagine glycan. The segment at 468–528 adopts an FYVE-type zinc-finger fold; sequence DEHATACRKC…VCEECYPIAT (61 aa). 8 residues coordinate Zn(2+): C474, C477, C490, C493, C498, C501, C520, and C523.

This sequence belongs to the arrestin family.

It is found in the membrane. The polypeptide is Arrestin domain-containing protein A (adcA) (Dictyostelium discoideum (Social amoeba)).